We begin with the raw amino-acid sequence, 520 residues long: Bifunctional purine biosynthesis protein PurH (520 aa).

The region spanning 1–146 (MAPVALLSVS…KNHADVAVLT (146 aa)) is the MGS-like domain.

It belongs to the PurH family.

It catalyses the reaction (6R)-10-formyltetrahydrofolate + 5-amino-1-(5-phospho-beta-D-ribosyl)imidazole-4-carboxamide = 5-formamido-1-(5-phospho-D-ribosyl)imidazole-4-carboxamide + (6S)-5,6,7,8-tetrahydrofolate. The catalysed reaction is IMP + H2O = 5-formamido-1-(5-phospho-D-ribosyl)imidazole-4-carboxamide. It participates in purine metabolism; IMP biosynthesis via de novo pathway; 5-formamido-1-(5-phospho-D-ribosyl)imidazole-4-carboxamide from 5-amino-1-(5-phospho-D-ribosyl)imidazole-4-carboxamide (10-formyl THF route): step 1/1. Its pathway is purine metabolism; IMP biosynthesis via de novo pathway; IMP from 5-formamido-1-(5-phospho-D-ribosyl)imidazole-4-carboxamide: step 1/1. The chain is Bifunctional purine biosynthesis protein PurH from Synechococcus sp. (strain CC9605).